The chain runs to 331 residues: Glycerol-3-phosphate dehydrogenase [NAD(P)+] (331 aa).

Ser-10, Trp-11, and Lys-101 together coordinate NADPH. Lys-101, Gly-132, and Ser-134 together coordinate sn-glycerol 3-phosphate. An NADPH-binding site is contributed by Ala-136. Residues Lys-188, Asp-241, Ser-251, Arg-252, and Asn-253 each coordinate sn-glycerol 3-phosphate. Lys-188 (proton acceptor) is an active-site residue. Arg-252 is an NADPH binding site. NADPH is bound by residues Val-276 and Glu-278.

This sequence belongs to the NAD-dependent glycerol-3-phosphate dehydrogenase family.

Its subcellular location is the cytoplasm. The catalysed reaction is sn-glycerol 3-phosphate + NAD(+) = dihydroxyacetone phosphate + NADH + H(+). The enzyme catalyses sn-glycerol 3-phosphate + NADP(+) = dihydroxyacetone phosphate + NADPH + H(+). The protein operates within membrane lipid metabolism; glycerophospholipid metabolism. In terms of biological role, catalyzes the reduction of the glycolytic intermediate dihydroxyacetone phosphate (DHAP) to sn-glycerol 3-phosphate (G3P), the key precursor for phospholipid synthesis. The polypeptide is Glycerol-3-phosphate dehydrogenase [NAD(P)+] (Acholeplasma laidlawii (strain PG-8A)).